The primary structure comprises 188 residues: UPF0301 protein Cag_1601 (188 aa).

Belongs to the UPF0301 (AlgH) family.

The chain is UPF0301 protein Cag_1601 from Chlorobium chlorochromatii (strain CaD3).